Consider the following 471-residue polypeptide: Ribosome biogenesis protein YTM1 (471 aa).

A ubiquitin-like (UBL) domain region spans residues V10–R92. WD repeat units lie at residues S119–S158, G165–T203, and S210–A249. A disordered region spans residues E245–V274. Polar residues predominate over residues L253–N262. 4 WD repeats span residues G285–T325, T327–S366, G372–Q412, and G436–S471. Residues Q412–G440 form a disordered region.

This sequence belongs to the WD repeat WDR12/YTM1 family. Component of the NOP7 complex, composed of ERB1, NOP7 and YTM1. The complex is held together by ERB1, which interacts with NOP7 via its N-terminal domain and with YTM1 via a high-affinity interaction between the seven-bladed beta-propeller domains of the 2 proteins. The NOP7 complex associates with the 66S pre-ribosome. Interacts (via UBL domain) with MDN1 (via VWFA/MIDAS domain).

It is found in the nucleus. The protein localises to the nucleolus. Its subcellular location is the nucleoplasm. In terms of biological role, component of the NOP7 complex, which is required for maturation of the 25S and 5.8S ribosomal RNAs and formation of the 60S ribosome. The protein is Ribosome biogenesis protein YTM1 of Phaeosphaeria nodorum (strain SN15 / ATCC MYA-4574 / FGSC 10173) (Glume blotch fungus).